The primary structure comprises 124 residues: Small ribosomal subunit protein bS6 (124 aa).

Residues 96–124 (ETGPSPMMKEVQREEAKKAAAAQPAEAQA) form a disordered region. Over residues 114–124 (AAAAQPAEAQA) the composition is skewed to low complexity.

It belongs to the bacterial ribosomal protein bS6 family.

Functionally, binds together with bS18 to 16S ribosomal RNA. The sequence is that of Small ribosomal subunit protein bS6 from Burkholderia orbicola (strain AU 1054).